The primary structure comprises 218 residues: N-(5'-phosphoribosyl)anthranilate isomerase (218 aa).

Belongs to the TrpF family.

The catalysed reaction is N-(5-phospho-beta-D-ribosyl)anthranilate = 1-(2-carboxyphenylamino)-1-deoxy-D-ribulose 5-phosphate. It participates in amino-acid biosynthesis; L-tryptophan biosynthesis; L-tryptophan from chorismate: step 3/5. The chain is N-(5'-phosphoribosyl)anthranilate isomerase from Chelativorans sp. (strain BNC1).